The primary structure comprises 448 residues: Glucose-6-phosphate isomerase (448 aa).

Glu291 (proton donor) is an active-site residue. Residues His312 and Lys425 contribute to the active site.

It belongs to the GPI family.

It is found in the cytoplasm. It catalyses the reaction alpha-D-glucose 6-phosphate = beta-D-fructose 6-phosphate. The protein operates within carbohydrate biosynthesis; gluconeogenesis. Its pathway is carbohydrate degradation; glycolysis; D-glyceraldehyde 3-phosphate and glycerone phosphate from D-glucose: step 2/4. Its function is as follows. Catalyzes the reversible isomerization of glucose-6-phosphate to fructose-6-phosphate. This chain is Glucose-6-phosphate isomerase, found in Symbiobacterium thermophilum (strain DSM 24528 / JCM 14929 / IAM 14863 / T).